Here is a 424-residue protein sequence, read N- to C-terminus: D-inositol 3-phosphate glycosyltransferase (424 aa).

1D-myo-inositol 3-phosphate is bound by residues H9, 20–25 (DAGGMN), K78, Y110, T134, and R154. Residue G23 participates in UDP-N-acetyl-alpha-D-glucosamine binding. 3 residues coordinate UDP-N-acetyl-alpha-D-glucosamine: R231, K236, and R295. Positions 304, 305, and 307 each coordinate Mg(2+). The UDP-N-acetyl-alpha-D-glucosamine site is built by E317 and E325. T331 provides a ligand contact to Mg(2+).

It belongs to the glycosyltransferase group 1 family. MshA subfamily. In terms of assembly, homodimer.

It catalyses the reaction 1D-myo-inositol 3-phosphate + UDP-N-acetyl-alpha-D-glucosamine = 1D-myo-inositol 2-acetamido-2-deoxy-alpha-D-glucopyranoside 3-phosphate + UDP + H(+). Its function is as follows. Catalyzes the transfer of a N-acetyl-glucosamine moiety to 1D-myo-inositol 3-phosphate to produce 1D-myo-inositol 2-acetamido-2-deoxy-glucopyranoside 3-phosphate in the mycothiol biosynthesis pathway. In Corynebacterium urealyticum (strain ATCC 43042 / DSM 7109), this protein is D-inositol 3-phosphate glycosyltransferase.